A 122-amino-acid chain; its full sequence is Large ribosomal subunit protein bL12 (122 aa).

Belongs to the bacterial ribosomal protein bL12 family. Homodimer. Part of the ribosomal stalk of the 50S ribosomal subunit. Forms a multimeric L10(L12)X complex, where L10 forms an elongated spine to which 2 to 4 L12 dimers bind in a sequential fashion. Binds GTP-bound translation factors.

Functionally, forms part of the ribosomal stalk which helps the ribosome interact with GTP-bound translation factors. Is thus essential for accurate translation. The sequence is that of Large ribosomal subunit protein bL12 from Clostridium botulinum (strain 657 / Type Ba4).